A 448-amino-acid chain; its full sequence is Probable D-serine dehydratase (448 aa).

Lys119 is subject to N6-(pyridoxal phosphate)lysine.

It belongs to the serine/threonine dehydratase family. DsdA subfamily. Requires pyridoxal 5'-phosphate as cofactor.

The catalysed reaction is D-serine = pyruvate + NH4(+). The chain is Probable D-serine dehydratase from Chromobacterium violaceum (strain ATCC 12472 / DSM 30191 / JCM 1249 / CCUG 213 / NBRC 12614 / NCIMB 9131 / NCTC 9757 / MK).